A 176-amino-acid chain; its full sequence is Ribosome rescue factor SmrB (176 aa).

Residues 93-168 form the Smr domain; sequence LDLHGYRQSE…GDAALLVLID (76 aa).

This sequence belongs to the SmrB family. Associates with collided ribosomes, but not with correctly translating polysomes.

Functionally, acts as a ribosome collision sensor. Detects stalled/collided disomes (pairs of ribosomes where the leading ribosome is stalled and a second ribosome has collided with it) and endonucleolytically cleaves mRNA at the 5' boundary of the stalled ribosome. Stalled/collided disomes form a new interface (primarily via the 30S subunits) that binds SmrB. Cleaved mRNA becomes available for tmRNA ligation, leading to ribosomal subunit dissociation and rescue of stalled ribosomes. This chain is Ribosome rescue factor SmrB, found in Shewanella baltica (strain OS195).